Here is a 389-residue protein sequence, read N- to C-terminus: 26S proteasome non-ATPase regulatory subunit 6 (389 aa).

Residues aspartate 193 to serine 361 form the PCI domain.

It belongs to the proteasome subunit S10 family. As to quaternary structure, component of the 19S proteasome regulatory particle complex. The 26S proteasome consists of a 20S core particle (CP) and two 19S regulatory subunits (RP). The regulatory particle is made of a lid composed of 9 subunits including PSMD6, a base containing 6 ATPases and few additional components.

In terms of biological role, component of the 26S proteasome, a multiprotein complex involved in the ATP-dependent degradation of ubiquitinated proteins. This complex plays a key role in the maintenance of protein homeostasis by removing misfolded or damaged proteins, which could impair cellular functions, and by removing proteins whose functions are no longer required. Therefore, the proteasome participates in numerous cellular processes, including cell cycle progression, apoptosis, or DNA damage repair. The protein is 26S proteasome non-ATPase regulatory subunit 6 (PSMD6) of Homo sapiens (Human).